The chain runs to 338 residues: tRNA-specific 2-thiouridylase MnmA (338 aa).

Residues 6–13 (ALSGGVDS) and M32 each bind ATP. C92 functions as the Nucleophile in the catalytic mechanism. Cysteines 92 and 186 form a disulfide. G116 provides a ligand contact to ATP. The interaction with tRNA stretch occupies residues 134-136 (KDQ). C186 acts as the Cysteine persulfide intermediate in catalysis. The interval 288-289 (RY) is interaction with tRNA.

Belongs to the MnmA/TRMU family.

It is found in the cytoplasm. The enzyme catalyses S-sulfanyl-L-cysteinyl-[protein] + uridine(34) in tRNA + AH2 + ATP = 2-thiouridine(34) in tRNA + L-cysteinyl-[protein] + A + AMP + diphosphate + H(+). Its function is as follows. Catalyzes the 2-thiolation of uridine at the wobble position (U34) of tRNA, leading to the formation of s(2)U34. This Campylobacter fetus subsp. fetus (strain 82-40) protein is tRNA-specific 2-thiouridylase MnmA.